A 183-amino-acid chain; its full sequence is TATA box-binding protein-like 1 (183 aa).

Belongs to the TBP family. In terms of assembly, binds TFIIA and TFIIB. Present in the brain, heart, liver and gizzard.

The protein localises to the cytoplasm. Its subcellular location is the nucleus. Part of a specialized transcription system that mediates the transcription of most ribosomal proteins through the 5'-TCT-3' motif which is a core promoter element at these genes. Seems to also mediate the transcription of NF1. Does not bind the TATA box. The protein is TATA box-binding protein-like 1 (TBPL1) of Gallus gallus (Chicken).